The chain runs to 435 residues: Arginine/serine-rich coiled-coil protein 2 (435 aa).

Over residues 1-27 the composition is skewed to basic and acidic residues; the sequence is MAASDTERDGLAPEKTSPDRDKKKEQS. The interval 1–230 is disordered; that stretch reads MAASDTERDG…PSPPPFRGRN (230 aa). A2 is subject to N-acetylalanine. S4 bears the Phosphoserine mark. A phosphothreonine mark is found at T6 and T16. Phosphoserine occurs at positions 17, 30, and 32. The span at 35–51 shows a compositional bias: basic residues; it reads ASKHHYSRSRSRSRERK. Over residues 66-111 the composition is skewed to basic and acidic residues; that stretch reads RSKEARRHESKDKSSKKHKSEEHNDKEHSSDKGRERLNSSENGEDR. Phosphoserine is present on S104. Basic residues predominate over residues 112-214; sequence HKRKERKSSR…KRIEKPRRFS (103 aa). The stretch at 230 to 270 forms a coiled coil; the sequence is NTAMDAQEALARRLERAKKLQEQREKEMVEKQKQQEIAAAA. K376 participates in a covalent cross-link: Glycyl lysine isopeptide (Lys-Gly) (interchain with G-Cter in SUMO1); alternate. Residue K376 forms a Glycyl lysine isopeptide (Lys-Gly) (interchain with G-Cter in SUMO2); alternate linkage. S377 is modified (phosphoserine).

The protein belongs to the RSRC2 family.

The polypeptide is Arginine/serine-rich coiled-coil protein 2 (RSRC2) (Pongo abelii (Sumatran orangutan)).